Here is a 145-residue protein sequence, read N- to C-terminus: Trafficking protein particle complex subunit 1 (145 aa).

The protein belongs to the TRAPP small subunits family. BET5 subfamily. In terms of assembly, part of the multisubunit transport protein particle (TRAPP) complex. The heterodimer TRAPPC6B-TRAPPC3 interacts with TRAPPC1 likely providing a core for TRAPP complex formation.

The protein resides in the golgi apparatus. The protein localises to the cis-Golgi network. Its subcellular location is the endoplasmic reticulum. In terms of biological role, may play a role in vesicular transport from endoplasmic reticulum to Golgi. In Mus musculus (Mouse), this protein is Trafficking protein particle complex subunit 1.